A 160-amino-acid chain; its full sequence is N-acetyltransferase Pat (160 aa).

One can recognise an N-acetyltransferase domain in the interval 5-148 (IKIRKATKED…VYGEMRLTER (144 aa)). Residues Leu79, Val81, Thr87, Gly89, Gly91, Thr92, Asn118, Lys123, and Lys127 each coordinate CoA.

It belongs to the acetyltransferase family. GNAT subfamily.

The enzyme catalyses L-lysyl-[protein] + acetyl-CoA = N(6)-acetyl-L-lysyl-[protein] + CoA + H(+). In terms of biological role, modulates activity of albA1, the major archaeal DNA compaction protein, by decreasing albA1's nucleic acid binding affinity through acetylation of 'Lys-16'. This chain is N-acetyltransferase Pat, found in Saccharolobus solfataricus (strain ATCC 35092 / DSM 1617 / JCM 11322 / P2) (Sulfolobus solfataricus).